The chain runs to 252 residues: Phosphoglycolate phosphatase (252 aa).

The Nucleophile role is filled by Asp-13. Residues Asp-13, Asp-15, and Asp-192 each coordinate Mg(2+).

Belongs to the HAD-like hydrolase superfamily. CbbY/CbbZ/Gph/YieH family. In terms of assembly, monomer. The cofactor is Mg(2+). Requires chloride as cofactor.

It carries out the reaction 2-phosphoglycolate + H2O = glycolate + phosphate. It functions in the pathway organic acid metabolism; glycolate biosynthesis; glycolate from 2-phosphoglycolate: step 1/1. Its function is as follows. Specifically catalyzes the dephosphorylation of 2-phosphoglycolate. Is involved in the dissimilation of the intracellular 2-phosphoglycolate formed during the DNA repair of 3'-phosphoglycolate ends, a major class of DNA lesions induced by oxidative stress. In Shigella dysenteriae serotype 1 (strain Sd197), this protein is Phosphoglycolate phosphatase.